Here is a 301-residue protein sequence, read N- to C-terminus: Quinolinate synthase (301 aa).

Residues His-21 and Ser-38 each coordinate iminosuccinate. Cys-83 is a binding site for [4Fe-4S] cluster. Iminosuccinate-binding positions include Tyr-109 to Asn-111 and Ser-126. [4Fe-4S] cluster is bound at residue Cys-169. Residues His-195–Glu-197 and Thr-212 each bind iminosuccinate. Position 257 (Cys-257) interacts with [4Fe-4S] cluster.

This sequence belongs to the quinolinate synthase family. Type 2 subfamily. Requires [4Fe-4S] cluster as cofactor.

The protein resides in the cytoplasm. It catalyses the reaction iminosuccinate + dihydroxyacetone phosphate = quinolinate + phosphate + 2 H2O + H(+). Its pathway is cofactor biosynthesis; NAD(+) biosynthesis; quinolinate from iminoaspartate: step 1/1. Catalyzes the condensation of iminoaspartate with dihydroxyacetone phosphate to form quinolinate. The sequence is that of Quinolinate synthase from Clostridium perfringens (strain 13 / Type A).